The primary structure comprises 607 residues: Condensin-2 complex subunit H2 (607 aa).

Position 19 is a phosphothreonine (Thr19). Ser95, Ser231, Ser235, and Ser252 each carry phosphoserine. 2 disordered regions span residues 211-312 (YPMS…WQSL) and 325-347 (KGKPYSVPPGVEEAPGQKRKRKG). Over residues 254–263 (GEEDAEDGAE) the composition is skewed to acidic residues. Ser494 bears the Phosphoserine mark.

This sequence belongs to the CND2 H2 (condensin-2 subunit 2) family. As to quaternary structure, component of the condensin-2 complex, which contains the SMC2 and SMC4 heterodimer, and three non SMC subunits, NCAPG2, NCAPH2 and NCAPD3 that probably regulate the complex.

The protein localises to the nucleus. Functionally, regulatory subunit of the condensin-2 complex, a complex that seems to provide chromosomes with an additional level of organization and rigidity and in establishing mitotic chromosome architecture. May promote the resolution of double-strand DNA catenanes (intertwines) between sister chromatids. Condensin-mediated compaction likely increases tension in catenated sister chromatids, providing directionality for type II topoisomerase-mediated strand exchanges toward chromatid decatenation. Required for decatenation of chromatin bridges at anaphase. Early in neurogenesis, may play an essential role to ensure accurate mitotic chromosome condensation in neuron stem cells, ultimately affecting neuron pool and cortex size. Seems to have lineage-specific role in T-cell development. The sequence is that of Condensin-2 complex subunit H2 from Mus musculus (Mouse).